The sequence spans 369 residues: Cytoplasmic tRNA 2-thiolation protein 1 (369 aa).

This sequence belongs to the TtcA family. CTU1/NCS6/ATPBD3 subfamily.

The protein localises to the cytoplasm. It functions in the pathway tRNA modification; 5-methoxycarbonylmethyl-2-thiouridine-tRNA biosynthesis. Plays a central role in 2-thiolation of mcm(5)S(2)U at tRNA wobble positions of tRNA(Lys), tRNA(Glu) and tRNA(Gln). Directly binds tRNAs and probably acts by catalyzing adenylation of tRNAs, an intermediate required for 2-thiolation. It is unclear whether it acts as a sulfurtransferase that transfers sulfur from thiocarboxylated URM1 onto the uridine of tRNAs at wobble position. Prior mcm(5) tRNA modification by the elongator complex is required for 2-thiolation. May also be involved in protein urmylation. This is Cytoplasmic tRNA 2-thiolation protein 1 from Meyerozyma guilliermondii (strain ATCC 6260 / CBS 566 / DSM 6381 / JCM 1539 / NBRC 10279 / NRRL Y-324) (Yeast).